Consider the following 292-residue polypeptide: NAD kinase (292 aa).

The active-site Proton acceptor is D73. NAD(+)-binding positions include D73–G74, N147–E148, H158, R175, D177, T188–S193, and Q247.

This sequence belongs to the NAD kinase family. Requires a divalent metal cation as cofactor.

It is found in the cytoplasm. The enzyme catalyses NAD(+) + ATP = ADP + NADP(+) + H(+). Involved in the regulation of the intracellular balance of NAD and NADP, and is a key enzyme in the biosynthesis of NADP. Catalyzes specifically the phosphorylation on 2'-hydroxyl of the adenosine moiety of NAD to yield NADP. The protein is NAD kinase of Salmonella dublin (strain CT_02021853).